The sequence spans 459 residues: Inositol-trisphosphate 3-kinase A (459 aa).

Positions 1-26 (MTLPGHPTGMARPRGAGPCSPGLERA) are disordered. An omega-N-methylarginine mark is found at Arg35, Arg55, and Arg62. Residues 49 to 164 (AAAGEPRARG…TSEDVGQKSH (116 aa)) are disordered. Positions 116 to 132 (RRLSTSSLSSTGSSSLL) are enriched in low complexity. Residues Ser135 and Ser195 each carry the phosphoserine modification. Residues Ser195, Lys207, 247 to 249 (QDL), and Asp260 contribute to the ATP site. Residues Lys262 and Arg283 each contribute to the substrate site. The interval 285–293 (DMYKKMLAV) is calmodulin-binding. 310–317 (KPRYMQWR) serves as a coordination point for substrate. Positions 334 and 414 each coordinate ATP. Residue Lys417 participates in substrate binding.

This sequence belongs to the inositol phosphokinase (IPK) family.

The protein localises to the cytoplasm. The protein resides in the cytoskeleton. The catalysed reaction is 1D-myo-inositol 1,4,5-trisphosphate + ATP = 1D-myo-inositol 1,3,4,5-tetrakisphosphate + ADP + H(+). With respect to regulation, activated by calcium/calmodulin. In terms of biological role, catalyzes the phosphorylation of 1D-myo-inositol 1,4,5-trisphosphate (InsP3) into 1D-myo-inositol 1,3,4,5-tetrakisphosphate and participates to the regulation of calcium homeostasis. The chain is Inositol-trisphosphate 3-kinase A from Rattus norvegicus (Rat).